The sequence spans 533 residues: Probable protein kinase UbiB (533 aa).

A helical membrane pass occupies residues Leu-24–Trp-44. The region spanning Arg-126–Gly-494 is the Protein kinase domain. Residues Leu-132–Val-140 and Lys-154 each bind ATP. Asp-289 serves as the catalytic Proton acceptor. A helical membrane pass occupies residues Leu-510–Ile-530.

Belongs to the ABC1 family. UbiB subfamily.

It localises to the cell inner membrane. Its pathway is cofactor biosynthesis; ubiquinone biosynthesis [regulation]. Is probably a protein kinase regulator of UbiI activity which is involved in aerobic coenzyme Q (ubiquinone) biosynthesis. This is Probable protein kinase UbiB from Pseudomonas paraeruginosa (strain DSM 24068 / PA7) (Pseudomonas aeruginosa (strain PA7)).